Reading from the N-terminus, the 156-residue chain is Cytochrome c-type biogenesis protein CcmE 2 (156 aa).

Residues 1–8 (MNPQRRRR) lie on the Cytoplasmic side of the membrane. Residues 9–29 (LWWVLALLLAGGLATTLVSMA) form a helical; Signal-anchor for type II membrane protein membrane-spanning segment. Topologically, residues 30 to 156 (LQRNVAYLYT…AAANQGGALR (127 aa)) are periplasmic. His-123 and Tyr-127 together coordinate heme. The interval 135 to 156 (KMGSAHRKHDVPAAANQGGALR) is disordered.

The protein belongs to the CcmE/CycJ family.

It localises to the cell inner membrane. Heme chaperone required for the biogenesis of c-type cytochromes. Transiently binds heme delivered by CcmC and transfers the heme to apo-cytochromes in a process facilitated by CcmF and CcmH. The protein is Cytochrome c-type biogenesis protein CcmE 2 of Xanthomonas oryzae pv. oryzae (strain MAFF 311018).